We begin with the raw amino-acid sequence, 492 residues long: GlcNAc-binding protein A (492 aa).

The signal sequence occupies residues 1 to 23; that stretch reads MNKSSTKTLIALSMMAVSSGVSA. Residues 24 to 204 enclose the Chitin-binding type-4 domain; that stretch reads HGYVSETNDG…AFYNVIDVKF (181 aa). Residues 443-484 enclose the Chitin-binding type-3 domain; it reads AGTKVLAEDSNVYQCKEFPYSGYCVQWTETATNFAPGVGSDW.

It belongs to the GbpA family.

Its subcellular location is the secreted. Functionally, probably interacts with GlcNAc residues. May promote attachment to both epithelial cell surfaces and chitin. The protein is GlcNAc-binding protein A of Aliivibrio fischeri (strain MJ11) (Vibrio fischeri).